Consider the following 396-residue polypeptide: L-lactate dehydrogenase (396 aa).

One can recognise an FMN hydroxy acid dehydrogenase domain in the interval 1–380; the sequence is MIISAASDYR…SQDSLVQELD (380 aa). Position 24 (Y24) interacts with substrate. The FMN site is built by S106 and Q127. Position 129 (Y129) interacts with substrate. T155 contributes to the FMN binding site. A substrate-binding site is contributed by R164. FMN is bound at residue K251. The active-site Proton acceptor is the H275. Substrate is bound at residue R278. 306–330 contacts FMN; it reads DSGIRNGLDVVRMIALGADTVLLGR.

This sequence belongs to the FMN-dependent alpha-hydroxy acid dehydrogenase family. It depends on FMN as a cofactor.

The protein resides in the cell inner membrane. It catalyses the reaction (S)-lactate + A = pyruvate + AH2. In terms of biological role, catalyzes the conversion of L-lactate to pyruvate. Is coupled to the respiratory chain. This chain is L-lactate dehydrogenase, found in Escherichia fergusonii (strain ATCC 35469 / DSM 13698 / CCUG 18766 / IAM 14443 / JCM 21226 / LMG 7866 / NBRC 102419 / NCTC 12128 / CDC 0568-73).